The primary structure comprises 360 residues: Protein RecA (360 aa).

An ATP-binding site is contributed by 64 to 71 (GHESSGKT). A disordered region spans residues 333–360 (QEQVQPEPKSKQSKSKQASEQATQDELI).

Belongs to the RecA family.

Its subcellular location is the cytoplasm. Can catalyze the hydrolysis of ATP in the presence of single-stranded DNA, the ATP-dependent uptake of single-stranded DNA by duplex DNA, and the ATP-dependent hybridization of homologous single-stranded DNAs. It interacts with LexA causing its activation and leading to its autocatalytic cleavage. In Francisella philomiragia subsp. philomiragia (strain ATCC 25017 / CCUG 19701 / FSC 153 / O#319-036), this protein is Protein RecA.